The primary structure comprises 567 residues: MSDRVEVNERRSDSVSEKEPARDDARKDVTDDQEDAPPFMTANNARVMLVQAIGGSLNGYSIGFVGVYSTLFGYSTNCASFLQENSCTTVPNADCKWFVSPTGSSYCGWPEVTCRKEYAYSSPAEMPGALARCEADSRCRWSYSDEECQNPSGYSSSESGIFAGSMIAGCLIGSVFAGPLASKIGARLSFLLVGLVGVVASVMYHASCAADEFWVLIVGRFVIGLFLGVICVACPVYTDQNAHPKWKRTIGVMFQVFTTLGIFVAALMGLALGQSIRFDHDGDQKVMARMQGLCVFSTLFSLLTVVLGIVTRESRAKFDGGEEGRAELNPSEYGYVEMIPRLLMGCVMAGTLQLTGINAVMNYAPTIMGSLGLAPLVGNFVVMLWNFVTTLASIPLSYVFTMRHVFLFGSIFTSCMCLFMCGIPVYPGVSKKLEAKNGVAITGILLFILGFEVCVGPCYYVLTQDMFPPSFRPRGASFTQVAQFIFNLIINVCYPIATESISGGPSGNQDKGQAVAFIFFGGLGLICFVIQVFFLHPWDEERDGKKVVAPAIGKKELSEESIGNRAE.

Over residues 1-30 the composition is skewed to basic and acidic residues; sequence MSDRVEVNERRSDSVSEKEPARDDARKDVT. A disordered region spans residues 1–38; that stretch reads MSDRVEVNERRSDSVSEKEPARDDARKDVTDDQEDAPP. The Cytoplasmic segment spans residues 1–46; the sequence is MSDRVEVNERRSDSVSEKEPARDDARKDVTDDQEDAPPFMTANNAR. A helical membrane pass occupies residues 47 to 67; the sequence is VMLVQAIGGSLNGYSIGFVGV. Residues 68–160 lie on the Extracellular side of the membrane; the sequence is YSTLFGYSTN…PSGYSSSESG (93 aa). The chain crosses the membrane as a helical span at residues 161-181; that stretch reads IFAGSMIAGCLIGSVFAGPLA. Residues 182–189 lie on the Cytoplasmic side of the membrane; sequence SKIGARLS. Residues 190–210 traverse the membrane as a helical segment; the sequence is FLLVGLVGVVASVMYHASCAA. The Extracellular segment spans residues 211–212; sequence DE. A helical transmembrane segment spans residues 213 to 233; that stretch reads FWVLIVGRFVIGLFLGVICVA. The Cytoplasmic segment spans residues 234 to 249; that stretch reads CPVYTDQNAHPKWKRT. Residues 250 to 270 traverse the membrane as a helical segment; it reads IGVMFQVFTTLGIFVAALMGL. The Extracellular segment spans residues 271 to 289; that stretch reads ALGQSIRFDHDGDQKVMAR. The helical transmembrane segment at 290–310 threads the bilayer; the sequence is MQGLCVFSTLFSLLTVVLGIV. Over 311–341 the chain is Cytoplasmic; it reads TRESRAKFDGGEEGRAELNPSEYGYVEMIPR. A helical membrane pass occupies residues 342-362; it reads LLMGCVMAGTLQLTGINAVMN. Residues 363–366 lie on the Extracellular side of the membrane; that stretch reads YAPT. Residues 367–387 form a helical membrane-spanning segment; sequence IMGSLGLAPLVGNFVVMLWNF. Residues 388 to 404 lie on the Cytoplasmic side of the membrane; the sequence is VTTLASIPLSYVFTMRH. A helical transmembrane segment spans residues 405-425; that stretch reads VFLFGSIFTSCMCLFMCGIPV. Topologically, residues 426 to 437 are extracellular; sequence YPGVSKKLEAKN. The chain crosses the membrane as a helical span at residues 438-458; the sequence is GVAITGILLFILGFEVCVGPC. Topologically, residues 459-480 are cytoplasmic; the sequence is YYVLTQDMFPPSFRPRGASFTQ. A helical membrane pass occupies residues 481-501; sequence VAQFIFNLIINVCYPIATESI. Topologically, residues 502–514 are extracellular; the sequence is SGGPSGNQDKGQA. Residues 515 to 535 form a helical membrane-spanning segment; that stretch reads VAFIFFGGLGLICFVIQVFFL. At 536 to 567 the chain is on the cytoplasmic side; sequence HPWDEERDGKKVVAPAIGKKELSEESIGNRAE.

It belongs to the major facilitator superfamily. Sugar transporter (TC 2.A.1.1) family.

The protein localises to the membrane. In terms of biological role, probable membrane transport protein. This chain is Probable transport protein (PRO-1), found in Leishmania enriettii.